Reading from the N-terminus, the 1041-residue chain is Nuclear pore complex protein NUP98A (1041 aa).

Residues 1–34 (MFGSSNPFGQSSGTSPFGSQSLFGQTSNTSSNNP) show a composition bias toward polar residues. A disordered region spans residues 1-44 (MFGSSNPFGQSSGTSPFGSQSLFGQTSNTSSNNPFAPATPFGTS). Repeat copies occupy residues 2–3 (FG), 8–9 (FG), 17–18 (FG), 23–24 (FG), 41–42 (FG), 56–57 (FG), 64–65 (FG), 79–80 (FG), 87–88 (FG), 94–95 (FG), 103–104 (FG), 109–110 (FG), 124–125 (FG), 135–136 (FG), 140–141 (FG), 146–147 (FG), 154–155 (FG), 162–163 (FG), 170–171 (FG), 178–179 (FG), 186–187 (FG), 194–195 (FG), 202–203 (FG), 210–211 (FG), 217–218 (FG), 222–223 (FG), 228–229 (FG), 236–237 (FG), 244–245 (FG), 252–253 (FG), 260–261 (FG), 268–269 (FG), 276–277 (FG), 284–285 (FG), 294–295 (FG), 300–301 (FG), 307–308 (FG), 312–313 (FG), 319–320 (FG), 329–330 (FG), 334–335 (FG), 339–340 (FG), 411–412 (FG), and 427–428 (FG). The segment at 2–677 (FGSSNPFGQS…QPVAVTNPFG (676 aa)) is 65 X 2 AA repeats of F-G. The disordered stretch occupies residues 98-171 (PASSPFGGSS…FGATSTPSFG (74 aa)). Residues 117 to 171 (STPQSNPFGNSTQQSQPAFGNTSFGSSTPFGATNTPAFGAPSTPSFGATSTPSFG) show a composition bias toward polar residues. Disordered regions lie at residues 315-347 (TPSP…GGSR) and 392-447 (QRGD…TNPF). The span at 430–447 (TSANPTNPFSSSTSTNPF) shows a compositional bias: low complexity. Tandem repeats lie at residues 459 to 460 (FG), 466 to 467 (FG), 471 to 472 (FG), 480 to 481 (FG), 491 to 492 (FG), 497 to 498 (FG), 506 to 507 (FG), 514 to 515 (FG), 521 to 522 (FG), 533 to 534 (FG), 555 to 556 (FG), 562 to 563 (FG), 565 to 566 (FG), 573 to 574 (FG), 586 to 587 (FG), 604 to 605 (FG), 627 to 628 (FG), 632 to 633 (FG), 650 to 651 (FG), 655 to 656 (FG), and 676 to 677 (FG). Residues 517–526 (SSSIFGSAPG) show a composition bias toward low complexity. A disordered region spans residues 517 to 560 (SSSIFGSAPGQGATPAFGNSQPSTLFNSTPSTGQTGSAFGQTGS). Positions 533-560 (FGNSQPSTLFNSTPSTGQTGSAFGQTGS) are enriched in polar residues. A disordered region spans residues 734–860 (KYRPGENGPK…KERPYKTLSG (127 aa)). Basic and acidic residues predominate over residues 782–793 (SRDKSILPKEQR). Over residues 831–846 (TSVNANQKPNGTTRSD) the composition is skewed to polar residues. A Peptidase S59 domain is found at 885-1027 (QSDYFTEPRI…GEWKFRVEHF (143 aa)).

The protein belongs to the nucleoporin GLFG family. As to quaternary structure, part of the nuclear pore complex (NPC). The NPC has an eight-fold symmetrical structure comprising a central transport channel and two rings, the cytoplasmic and nuclear rings, to which eight filaments are attached. The cytoplasmic filaments have loose ends, while the nuclear filaments are joined in a distal ring, forming a nuclear basket. NPCs are highly dynamic in configuration and composition, and can be devided in 3 subcomplexes, the NUP62 subcomplex, the NUP107-160 subcomplex and the NUP93 subcomplex, containing approximately 30 different nucleoporin proteins.

It localises to the nucleus. The protein resides in the nuclear pore complex. The protein is Nuclear pore complex protein NUP98A of Arabidopsis thaliana (Mouse-ear cress).